We begin with the raw amino-acid sequence, 175 residues long: CASP-like protein 2C1 (175 aa).

Topologically, residues 1 to 7 are cytoplasmic; it reads MVKLRET. A helical transmembrane segment spans residues 8 to 28; sequence EVILRLCIVFFLLLTSCLIGL. At 29 to 45 the chain is on the extracellular side; sequence DSQTKEIAYIHKNVSFR. N41 is a glycosylation site (N-linked (GlcNAc...) asparagine). Residues 46–66 form a helical membrane-spanning segment; that stretch reads YLLALEAELYIDVVVAAYNLV. Residues 67 to 91 are Cytoplasmic-facing; the sequence is QLGLGWYNVEQKTSNPKWFSYLLDQ. Residues 92 to 112 traverse the membrane as a helical segment; it reads TAAYVVFAGTSAAAQHSLLVV. The Extracellular segment spans residues 113–136; it reads TGSRELQWMKWCYKFTRFCFQMGS. The helical transmembrane segment at 137–157 threads the bilayer; it reads AIILNYIAAALMVLLSSISAF. Residues 158–175 lie on the Cytoplasmic side of the membrane; the sequence is NLFRLYSPKRFFRFKSSS.

It belongs to the Casparian strip membrane proteins (CASP) family. Homodimer and heterodimers.

The protein resides in the cell membrane. This chain is CASP-like protein 2C1, found in Arabidopsis thaliana (Mouse-ear cress).